The following is a 336-amino-acid chain: Putative ALA-interacting subunit 4 (336 aa).

Residues 36-56 form a helical membrane-spanning segment; the sequence is VILTFLVSGVVFIPLGVICLF. N-linked (GlcNAc...) asparagine glycosylation is present at Asn-94. Over residues 127–142 the composition is skewed to basic and acidic residues; the sequence is RQDGQLRSPKDEHETK. Positions 127 to 148 are disordered; sequence RQDGQLRSPKDEHETKSCAPED. Asn-167 carries an N-linked (GlcNAc...) asparagine glycan. The chain crosses the membrane as a helical span at residues 290 to 310; it reads FLGIAYLTVGSICLFLAVSFS. The N-linked (GlcNAc...) asparagine glycan is linked to Asn-329.

Belongs to the CDC50/LEM3 family. Expressed in flowers. May be restricted to pollen grains.

Its subcellular location is the membrane. The polypeptide is Putative ALA-interacting subunit 4 (ALIS4) (Arabidopsis thaliana (Mouse-ear cress)).